Reading from the N-terminus, the 233-residue chain is Purine nucleoside phosphorylase DeoD-type (233 aa).

Histidine 4 lines the a purine D-ribonucleoside pocket. Residues glycine 20, arginine 24, arginine 43, and 87 to 90 (RVGT) each bind phosphate. Residues 179 to 181 (EME) and 203 to 204 (SD) contribute to the a purine D-ribonucleoside site. The active-site Proton donor is aspartate 204.

The protein belongs to the PNP/UDP phosphorylase family. In terms of assembly, homohexamer; trimer of homodimers.

The catalysed reaction is a purine D-ribonucleoside + phosphate = a purine nucleobase + alpha-D-ribose 1-phosphate. It carries out the reaction a purine 2'-deoxy-D-ribonucleoside + phosphate = a purine nucleobase + 2-deoxy-alpha-D-ribose 1-phosphate. Catalyzes the reversible phosphorolytic breakdown of the N-glycosidic bond in the beta-(deoxy)ribonucleoside molecules, with the formation of the corresponding free purine bases and pentose-1-phosphate. The protein is Purine nucleoside phosphorylase DeoD-type of Clostridium novyi (strain NT).